The chain runs to 367 residues: Aspartate beta-hydroxylase domain-containing protein 1 (367 aa).

Residues 1 to 27 (MWRGSSAGGSQGAAMEGTGGELGGQGN) are disordered. Over 1–49 (MWRGSSAGGSQGAAMEGTGGELGGQGNWGLEDAPGLLARASLPIMPAWP) the chain is Cytoplasmic. The chain crosses the membrane as a helical span at residues 50 to 72 (LPLASSALTLLLGALTSLFLWYC). Residues 73–367 (YRLGSQDMQA…ALDFVFAPDP (295 aa)) lie on the Lumenal side of the membrane. Residues 88–122 (RAGAVGGRPGGCSEAGRPSPGRSGESGEGPRTEGL) form a disordered region. At Ser-106 the chain carries Phosphoserine.

The protein belongs to the aspartyl/asparaginyl beta-hydroxylase family.

Its subcellular location is the membrane. This is Aspartate beta-hydroxylase domain-containing protein 1 (ASPHD1) from Bos taurus (Bovine).